A 132-amino-acid polypeptide reads, in one-letter code: Small ribosomal subunit protein uS8 (132 aa).

This sequence belongs to the universal ribosomal protein uS8 family. As to quaternary structure, part of the 30S ribosomal subunit. Contacts proteins S5 and S12.

In terms of biological role, one of the primary rRNA binding proteins, it binds directly to 16S rRNA central domain where it helps coordinate assembly of the platform of the 30S subunit. This Bartonella tribocorum (strain CIP 105476 / IBS 506) protein is Small ribosomal subunit protein uS8.